The following is a 358-amino-acid chain: Trace amine-associated receptor 7h (358 aa).

At 1–47 (MATDDESFPWDQDSILSRDLLSALSPQLCYENLNRSCVRSPYSPGPR) the chain is on the extracellular side. Residue asparagine 34 is glycosylated (N-linked (GlcNAc...) asparagine). Disulfide bonds link cysteine 37/cysteine 201 and cysteine 120/cysteine 205. The chain crosses the membrane as a helical span at residues 48 to 68 (LILYAVFGFGAVLAVCGNLLV). Topologically, residues 69–83 (MTSILHFRQLHSPAN) are cytoplasmic. The helical transmembrane segment at 84-104 (FLVASLACADLLVGLTVMPFS) threads the bilayer. Over 105 to 125 (MVRSVEGCWYFGDSYCKLHTS) the chain is Extracellular. Residues 126–143 (FDMSFCCSSLLHLCFISV) traverse the membrane as a helical segment. Topologically, residues 144 to 166 (DRYIAVSDPLIYPIRFTASVSGK) are cytoplasmic. A helical membrane pass occupies residues 167–187 (CITFSWFLSIIYGFSLIYTGA). Topologically, residues 188–217 (SEAGLKDLVSALSCVGGCQIPMNQSCVLIN) are extracellular. N-linked (GlcNAc...) asparagine glycosylation occurs at asparagine 210. Residues 218–238 (FLLFLVPTLVMMTVYSKIFLI) traverse the membrane as a helical segment. Residues 239–274 (AKQQAQNMEKMSKQTTRASDSYKDRVAKRERKAAKT) are Cytoplasmic-facing. The chain crosses the membrane as a helical span at residues 275-295 (LGIAVAAFLLSWLPYLIDSII). At 296–309 (DAFLGFITPSYVYE) the chain is on the extracellular side. Residues 310–333 (ILVWIVYYNSAMNPLIYAFFYPWF) form a helical membrane-spanning segment. The Cytoplasmic segment spans residues 334–358 (RNAIKLIVTGKILKQNSSTTNLFSE).

The protein belongs to the G-protein coupled receptor 1 family.

It localises to the cell membrane. Its function is as follows. Olfactory receptor specific for N,N-dimethylalkylamines trace amines. Trace amine compounds are enriched in animal body fluids and act on trace amine-associated receptors (TAARs) to elicit both intraspecific and interspecific innate behaviors. Ligand-binding causes a conformation change that triggers signaling via G(s)-class of G alpha proteins (GNAL or GNAS). The protein is Trace amine-associated receptor 7h of Rattus norvegicus (Rat).